Consider the following 473-residue polypeptide: PPE family protein PPE37 (473 aa).

The short motif at 203–206 (DFLE) is the Iron-binding motif element. 2 consecutive transmembrane segments (helical) span residues 227-247 (VLDWFISFVSGPVFTFLAYLV) and 250-270 (PLIYFGPFAPLTSPVLLPAGL).

The protein belongs to the mycobacterial PPE family.

It is found in the cell membrane. Essential for efficient heme-iron acquisition (HIA). Binds iron. Strains with a functional PPE37 can utilize low concentrations of hemin very efficiently in broth and on agar plates. During infection, might interfere with the pro-inflammatory cytokine response in infected macrophages. Functionally, in vitro, incubation of the protein in the presence of M.tuberculosis proteases leads to the cleavage of PPE37 into two segments, the N- and C-terminal segments. Transfection of human monocytic THP-1 cell lines with the N-terminal segment leads to the proliferation and differentiation of THP-1 cells into adherent stellate cells with dendritic cell-like morphology. Transfection of THP-1 cells with the C-terminal segment leads to the apoptosis of the cells. Recombinant protein antigens display strong B-cell response in tuberculosis patients and immunized mice. The sequence is that of PPE family protein PPE37 from Mycobacterium tuberculosis (strain ATCC 25618 / H37Rv).